A 283-amino-acid chain; its full sequence is ATP synthase gamma chain (283 aa).

The protein belongs to the ATPase gamma chain family. As to quaternary structure, F-type ATPases have 2 components, CF(1) - the catalytic core - and CF(0) - the membrane proton channel. CF(1) has five subunits: alpha(3), beta(3), gamma(1), delta(1), epsilon(1). CF(0) has three main subunits: a, b and c.

It localises to the cell inner membrane. Produces ATP from ADP in the presence of a proton gradient across the membrane. The gamma chain is believed to be important in regulating ATPase activity and the flow of protons through the CF(0) complex. This chain is ATP synthase gamma chain, found in Ehrlichia ruminantium (strain Welgevonden).